The primary structure comprises 227 residues: PKHD-type hydroxylase azo0608 (227 aa).

The Fe2OG dioxygenase domain maps to R78 to S178. Fe cation is bound by residues H97, D99, and H159. R169 serves as a coordination point for 2-oxoglutarate.

Fe(2+) is required as a cofactor. It depends on L-ascorbate as a cofactor.

The protein is PKHD-type hydroxylase azo0608 of Azoarcus sp. (strain BH72).